A 179-amino-acid polypeptide reads, in one-letter code: Inorganic pyrophosphatase (179 aa).

Residues Lys-30, Arg-44, and Tyr-56 each coordinate substrate. 3 residues coordinate Mg(2+): Asp-66, Asp-71, and Asp-103. Residue Tyr-143 coordinates substrate.

Belongs to the PPase family. Homohexamer. Mg(2+) is required as a cofactor.

The protein resides in the cytoplasm. It carries out the reaction diphosphate + H2O = 2 phosphate + H(+). Catalyzes the hydrolysis of inorganic pyrophosphate (PPi) forming two phosphate ions. The sequence is that of Inorganic pyrophosphatase from Wigglesworthia glossinidia brevipalpis.